Here is a 224-residue protein sequence, read N- to C-terminus: Prolactin-3D1 (224 aa).

A signal peptide spans methionine 1–serine 29. Intrachain disulfides connect cysteine 81/cysteine 199 and cysteine 216/cysteine 224. N-linked (GlcNAc...) asparagine glycans are attached at residues asparagine 109 and asparagine 158.

This sequence belongs to the somatotropin/prolactin family.

It localises to the secreted. The sequence is that of Prolactin-3D1 (Prl3d1) from Mus musculus (Mouse).